The sequence spans 633 residues: Uracil permease (633 aa).

Transmembrane regions (helical) follow at residues 143–163, 173–193, 197–217, 242–262, 268–288, 310–330, 350–370, 400–420, 442–462, 465–485, 521–541, and 559–579; these read WWQC…FVVL, LSFP…WPVI, VMAI…VSLM, YEFM…LVPP, LFTV…IWAI, FSWA…TMVI, LVCI…VTAA, AGVF…NISA, GSLF…MATS, FTMA…VVCS, ALAA…AEVG, and YWVG…FFPV.

Belongs to the purine-cytosine permease (2.A.39) family. Glycosylated (possible); but there is not yet direct biochemical evidence for it.

The protein resides in the membrane. In terms of biological role, transport of uracil. This Saccharomyces cerevisiae (strain ATCC 204508 / S288c) (Baker's yeast) protein is Uracil permease (FUR4).